A 289-amino-acid chain; its full sequence is Protease HtpX homolog (289 aa).

The next 2 helical transmembrane spans lie at 11–31 and 36–54; these read AALF…IGAG and APIW…YGYW. Residue H138 coordinates Zn(2+). Residue E139 is part of the active site. H142 is a binding site for Zn(2+). 2 consecutive transmembrane segments (helical) span residues 153–173 and 182–202; these read VAAA…FFGG and LAMI…QMAI. E207 contacts Zn(2+).

The protein belongs to the peptidase M48B family. It depends on Zn(2+) as a cofactor.

The protein resides in the cell membrane. The sequence is that of Protease HtpX homolog from Pseudarthrobacter chlorophenolicus (strain ATCC 700700 / DSM 12829 / CIP 107037 / JCM 12360 / KCTC 9906 / NCIMB 13794 / A6) (Arthrobacter chlorophenolicus).